Reading from the N-terminus, the 66-residue chain is uncharacterized protein (66 aa).

This is an uncharacterized protein from Schizosaccharomyces pombe (strain 972 / ATCC 24843) (Fission yeast).